The following is an 852-amino-acid chain: Bifunctional uridylyltransferase/uridylyl-removing enzyme (852 aa).

Positions 1 to 318 (MPANLSSALE…STPLRVTLRI (318 aa)) are uridylyltransferase. The tract at residues 319 to 672 (DDDYIQVNNQ…SRILPKSDSF (354 aa)) is uridylyl-removing. The HD domain maps to 436 to 558 (VDDHILTVVR…VQTHERLSAL (123 aa)). 2 consecutive ACT domains span residues 673 to 757 (QVMV…SRSR) and 785 to 852 (SVEI…EQLS).

This sequence belongs to the GlnD family. It depends on Mg(2+) as a cofactor.

It catalyses the reaction [protein-PII]-L-tyrosine + UTP = [protein-PII]-uridylyl-L-tyrosine + diphosphate. The catalysed reaction is [protein-PII]-uridylyl-L-tyrosine + H2O = [protein-PII]-L-tyrosine + UMP + H(+). Its activity is regulated as follows. Uridylyltransferase (UTase) activity is inhibited by glutamine, while glutamine activates uridylyl-removing (UR) activity. Functionally, modifies, by uridylylation and deuridylylation, the PII regulatory proteins (GlnB and homologs), in response to the nitrogen status of the cell that GlnD senses through the glutamine level. Under low glutamine levels, catalyzes the conversion of the PII proteins and UTP to PII-UMP and PPi, while under higher glutamine levels, GlnD hydrolyzes PII-UMP to PII and UMP (deuridylylation). Thus, controls uridylylation state and activity of the PII proteins, and plays an important role in the regulation of nitrogen assimilation and metabolism. The chain is Bifunctional uridylyltransferase/uridylyl-removing enzyme from Neisseria meningitidis serogroup B (strain ATCC BAA-335 / MC58).